The sequence spans 1663 residues: Centrosomal protein of 152 kDa (1663 aa).

Residues 1 to 60 (MSIDFDSGALQTQQEDEEYDKEDYAREQELQQLLTDLPHDMLDDSLSSSPEPSYSDCSGH) form a disordered region. A compositionally biased stretch (low complexity) spans 44 to 57 (DSLSSSPEPSYSDC). Coiled-coil stretches lie at residues 266 to 516 (LQVL…ARLG), 571 to 664 (ELER…KHLL), 696 to 796 (QDKK…VTAK), 843 to 886 (SDCI…VEVA), 946 to 977 (DFTV…ALLK), 1014 to 1047 (RNKL…AERL), and 1182 to 1288 (VQQL…KNDM). 2 disordered regions span residues 1383 to 1408 (ETTQ…NQNI) and 1595 to 1628 (KRKD…SDVG). Over residues 1603-1613 (RKYSNKIQEPS) the composition is skewed to polar residues.

Belongs to the CEP152 family.

Its subcellular location is the cytoplasm. The protein localises to the cytoskeleton. The protein resides in the microtubule organizing center. It is found in the centrosome. It localises to the centriole. Functionally, necessary for centrosome duplication; the function also seems to involve cep63, cdk5rap2 and wdr62 through a stepwise assembled complex at the centrosome that recruits cdk2 required for centriole duplication. Acts as a molecular scaffold facilitating the interaction of plk4 and cpap, 2 molecules involved in centriole formation. Also plays a key role in deuterosome-mediated centriole amplification in multiciliated that can generate more than 100 centrioles. Overexpression of cep152 can drive amplification of centrioles. This is Centrosomal protein of 152 kDa (cep152) from Xenopus laevis (African clawed frog).